Reading from the N-terminus, the 347-residue chain is UDP-galactose/UDP-glucose transporter 5 (347 aa).

A run of 8 helical transmembrane segments spans residues Leu-17–Leu-37, Leu-57–Ala-77, Val-116–Met-136, Phe-143–Ala-163, Thr-177–Phe-197, Ile-218–Val-238, Cys-247–Tyr-267, and Cys-293–Gly-313. Positions Ser-325–Pro-347 are disordered.

It belongs to the nucleotide-sugar transporter family. UDP-galactose:UMP antiporter (TC 2.A.7.11) subfamily.

Its subcellular location is the membrane. Sugar transporter involved in the transport of nucleotide-sugars from cytoplasm into the Golgi and/or the endoplasmic reticulum. The chain is UDP-galactose/UDP-glucose transporter 5 from Arabidopsis thaliana (Mouse-ear cress).